The primary structure comprises 496 residues: FAD-linked oxidoreductase AFUA_1G00980 (496 aa).

An N-terminal signal peptide occupies residues 1-21 (MRRATLIPLAIWVAGAAAAAA). N-linked (GlcNAc...) asparagine glycosylation is found at Asn-49, Asn-122, Asn-205, Asn-258, Asn-344, Asn-351, Asn-371, and Asn-382. An FAD-binding PCMH-type domain is found at 64–243 (MAPTYAVSVR…VEAVYQVTDL (180 aa)).

This sequence belongs to the oxygen-dependent FAD-linked oxidoreductase family. The cofactor is FAD.

In terms of biological role, FAD-linked oxidoreductase; part of the gene cluster that mediates the biosynthesis of fumigermin that inhibits germination of spores of the inducing S.rapamycinicus, and thus helps the fungus to defend resources in the shared habitat against a bacterial competitor. The partially reducing polyketide synthase fngA alone is sufficient for the production of fumigermin. FgnA catalyzes the condensation of 3 malonyl-CoA units to an acetyl-CoA starter, and 3 methylations to yield fumigermin. It is remarkable that the five cluster genes including fgnA are conserved in distantly related fungi, supporting the assumption of a fumigermin cluster; it is thus possible that originally all five genes were functional, but that the genes encoding tailoring enzymes became inactive from mutations, similar to the case of the fgnA gene in strains A1163 and Af293. In Aspergillus fumigatus (strain ATCC MYA-4609 / CBS 101355 / FGSC A1100 / Af293) (Neosartorya fumigata), this protein is FAD-linked oxidoreductase AFUA_1G00980.